Consider the following 358-residue polypeptide: UPF0283 membrane protein PM0909 (358 aa).

The next 3 helical transmembrane spans lie at 62–82 (LALT…QWLV), 90–110 (WIYF…VSSL), and 213–233 (ALEA…MFFL).

This sequence belongs to the UPF0283 family.

It is found in the cell inner membrane. The polypeptide is UPF0283 membrane protein PM0909 (Pasteurella multocida (strain Pm70)).